The sequence spans 366 residues: Anhydro-N-acetylmuramic acid kinase (366 aa).

10–17 (GTSLDGVD) provides a ligand contact to ATP.

The protein belongs to the anhydro-N-acetylmuramic acid kinase family.

The enzyme catalyses 1,6-anhydro-N-acetyl-beta-muramate + ATP + H2O = N-acetyl-D-muramate 6-phosphate + ADP + H(+). The protein operates within amino-sugar metabolism; 1,6-anhydro-N-acetylmuramate degradation. It functions in the pathway cell wall biogenesis; peptidoglycan recycling. Catalyzes the specific phosphorylation of 1,6-anhydro-N-acetylmuramic acid (anhMurNAc) with the simultaneous cleavage of the 1,6-anhydro ring, generating MurNAc-6-P. Is required for the utilization of anhMurNAc either imported from the medium or derived from its own cell wall murein, and thus plays a role in cell wall recycling. This is Anhydro-N-acetylmuramic acid kinase from Nitrobacter winogradskyi (strain ATCC 25391 / DSM 10237 / CIP 104748 / NCIMB 11846 / Nb-255).